A 120-amino-acid polypeptide reads, in one-letter code: Aspartate 1-decarboxylase (120 aa).

Ser-25 acts as the Schiff-base intermediate with substrate; via pyruvic acid in catalysis. The residue at position 25 (Ser-25) is a Pyruvic acid (Ser). Position 57 (Thr-57) interacts with substrate. The Proton donor role is filled by Tyr-58. 73 to 75 (GAA) contacts substrate.

Belongs to the PanD family. In terms of assembly, heterooctamer of four alpha and four beta subunits. Pyruvate is required as a cofactor. Is synthesized initially as an inactive proenzyme, which is activated by self-cleavage at a specific serine bond to produce a beta-subunit with a hydroxyl group at its C-terminus and an alpha-subunit with a pyruvoyl group at its N-terminus.

The protein resides in the cytoplasm. It catalyses the reaction L-aspartate + H(+) = beta-alanine + CO2. It functions in the pathway cofactor biosynthesis; (R)-pantothenate biosynthesis; beta-alanine from L-aspartate: step 1/1. In terms of biological role, catalyzes the pyruvoyl-dependent decarboxylation of aspartate to produce beta-alanine. The chain is Aspartate 1-decarboxylase from Ralstonia pickettii (strain 12J).